We begin with the raw amino-acid sequence, 727 residues long: Catalase-peroxidase (727 aa).

Positions 1-21 (MDAKVEDNIAGKCPMGHGRGP) are disordered. Residues 95-217 (WHAAGTYRIT…LGAVQMGLIY (123 aa)) constitute a cross-link (tryptophyl-tyrosyl-methioninium (Trp-Tyr) (with M-243)). Residue H96 is the Proton acceptor of the active site. Positions 217–243 (YVNPEGPNGNPDPLASARDIRETFARM) form a cross-link, tryptophyl-tyrosyl-methioninium (Tyr-Met) (with W-95). H258 serves as a coordination point for heme b.

The protein belongs to the peroxidase family. Peroxidase/catalase subfamily. Homodimer or homotetramer. Requires heme b as cofactor. Post-translationally, formation of the three residue Trp-Tyr-Met cross-link is important for the catalase, but not the peroxidase activity of the enzyme.

The enzyme catalyses H2O2 + AH2 = A + 2 H2O. The catalysed reaction is 2 H2O2 = O2 + 2 H2O. In terms of biological role, bifunctional enzyme with both catalase and broad-spectrum peroxidase activity. Important for stationary phase survival. This is Catalase-peroxidase from Caulobacter vibrioides (strain ATCC 19089 / CIP 103742 / CB 15) (Caulobacter crescentus).